We begin with the raw amino-acid sequence, 510 residues long: D-alanine--D-alanyl carrier protein ligase (510 aa).

Residue 157–158 (TS) coordinates ATP. Position 202 (aspartate 202) interacts with D-alanine. ATP is bound at residue 297–302 (NTYGPT). Valine 306 serves as a coordination point for D-alanine. The ATP site is built by aspartate 389 and lysine 498. Lysine 498 is a binding site for D-alanine.

The protein belongs to the ATP-dependent AMP-binding enzyme family. DltA subfamily.

It localises to the cytoplasm. It catalyses the reaction holo-[D-alanyl-carrier protein] + D-alanine + ATP = D-alanyl-[D-alanyl-carrier protein] + AMP + diphosphate. The protein operates within cell wall biogenesis; lipoteichoic acid biosynthesis. Its function is as follows. Catalyzes the first step in the D-alanylation of lipoteichoic acid (LTA), the activation of D-alanine and its transfer onto the D-alanyl carrier protein (Dcp) DltC. In an ATP-dependent two-step reaction, forms a high energy D-alanyl-AMP intermediate, followed by transfer of the D-alanyl residue as a thiol ester to the phosphopantheinyl prosthetic group of the Dcp. D-alanylation of LTA plays an important role in modulating the properties of the cell wall in Gram-positive bacteria, influencing the net charge of the cell wall. This Listeria monocytogenes serovar 1/2a (strain ATCC BAA-679 / EGD-e) protein is D-alanine--D-alanyl carrier protein ligase.